A 415-amino-acid chain; its full sequence is Gamma-glutamyl phosphate reductase (415 aa).

It belongs to the gamma-glutamyl phosphate reductase family.

Its subcellular location is the cytoplasm. The catalysed reaction is L-glutamate 5-semialdehyde + phosphate + NADP(+) = L-glutamyl 5-phosphate + NADPH + H(+). The protein operates within amino-acid biosynthesis; L-proline biosynthesis; L-glutamate 5-semialdehyde from L-glutamate: step 2/2. Its function is as follows. Catalyzes the NADPH-dependent reduction of L-glutamate 5-phosphate into L-glutamate 5-semialdehyde and phosphate. The product spontaneously undergoes cyclization to form 1-pyrroline-5-carboxylate. The polypeptide is Gamma-glutamyl phosphate reductase (Parabacteroides distasonis (strain ATCC 8503 / DSM 20701 / CIP 104284 / JCM 5825 / NCTC 11152)).